A 576-amino-acid chain; its full sequence is Arginine--tRNA ligase (576 aa).

Residues 121–131 (PNLAKEMHVGH) carry the 'HIGH' region motif.

The protein belongs to the class-I aminoacyl-tRNA synthetase family. As to quaternary structure, monomer.

It localises to the cytoplasm. It catalyses the reaction tRNA(Arg) + L-arginine + ATP = L-arginyl-tRNA(Arg) + AMP + diphosphate. In Alteromonas mediterranea (strain DSM 17117 / CIP 110805 / LMG 28347 / Deep ecotype), this protein is Arginine--tRNA ligase.